The sequence spans 128 residues: MERLQGLLLWLLLSPSVVWASRGPLRPLCRPVNATLAAENEACPVCITFSTSICAGYCPSMVRVLPAALPPVPQPVCTYHELHFASVRLPGCPPGVDPMVSFPVALSCRCGPCRLSTSDCGGPRTQPM.

Positions 1–20 (MERLQGLLLWLLLSPSVVWA) are cleaved as a signal peptide. Cystine bridges form between C29–C77, C43–C92, C54–C108, C58–C110, and C113–C120. N-linked (GlcNAc...) asparagine glycosylation occurs at N33.

Belongs to the glycoprotein hormones subunit beta family. As to quaternary structure, heterodimer of a common alpha chain and a unique beta chain which confers biological specificity to thyrotropin, lutropin, follitropin and gonadotropin.

The protein resides in the secreted. Functionally, promotes spermatogenesis and ovulation by stimulating the testes and ovaries to synthesize steroids. The protein is Lutropin subunit beta (LHB) of Phodopus sungorus (Striped hairy-footed hamster).